The following is a 301-amino-acid chain: E3 ubiquitin-protein ligase DIS1 (301 aa).

An RING-type; degenerate zinc finger spans residues 53-89 (CPVCLSAMYPPIHQCSNGHTLCSGCKPRVHNRCPTCR). The segment at 106–166 (SLELPCKYQN…LVNHLKDDHK (61 aa)) adopts an SIAH-type; degenerate zinc-finger fold.

It belongs to the SINA (Seven in absentia) family. As to quaternary structure, homodimer. Interacts with NEK6. Interacts with SKIPA.

The protein localises to the nucleus. It is found in the cytoplasm. The enzyme catalyses S-ubiquitinyl-[E2 ubiquitin-conjugating enzyme]-L-cysteine + [acceptor protein]-L-lysine = [E2 ubiquitin-conjugating enzyme]-L-cysteine + N(6)-ubiquitinyl-[acceptor protein]-L-lysine.. It functions in the pathway protein modification; protein ubiquitination. Its function is as follows. E3 ubiquitin-protein ligase that mediates ubiquitination and subsequent proteasomal degradation of target proteins. E3 ubiquitin ligases accept ubiquitin from an E2 ubiquitin-conjugating enzyme in the form of a thioester and then directly transfers the ubiquitin to targeted substrates. Plays a negative role in drought stress tolerance through transcriptional and post-translational regulation of diverse stress-related genes. Interacts with the serine/threonine-protein kinase NEK6 and promotes its degradation via the 26S proteasome-dependent pathway. This chain is E3 ubiquitin-protein ligase DIS1, found in Oryza sativa subsp. japonica (Rice).